The sequence spans 691 residues: Elongation factor G (691 aa).

Residues 8 to 282 form the tr-type G domain; sequence EKTRNIGIMA…AVVDYLPSPV (275 aa). GTP contacts are provided by residues 17 to 24, 81 to 85, and 135 to 138; these read AHIDAGKT, DTPGH, and NKMD.

It belongs to the TRAFAC class translation factor GTPase superfamily. Classic translation factor GTPase family. EF-G/EF-2 subfamily.

It is found in the cytoplasm. Its function is as follows. Catalyzes the GTP-dependent ribosomal translocation step during translation elongation. During this step, the ribosome changes from the pre-translocational (PRE) to the post-translocational (POST) state as the newly formed A-site-bound peptidyl-tRNA and P-site-bound deacylated tRNA move to the P and E sites, respectively. Catalyzes the coordinated movement of the two tRNA molecules, the mRNA and conformational changes in the ribosome. This is Elongation factor G from Caldicellulosiruptor bescii (strain ATCC BAA-1888 / DSM 6725 / KCTC 15123 / Z-1320) (Anaerocellum thermophilum).